Reading from the N-terminus, the 478-residue chain is Major facilitator superfamily domain-containing protein 12 (478 aa).

Residue methionine 1 is modified to N-acetylmethionine. Topologically, residues 1–26 (MVPGSPAAGAGPAPRALSLAARLSYA) are cytoplasmic. The helical transmembrane segment at 27–47 (VGHFLNDLCASMWFTYLLLYL) threads the bilayer. The Lumenal portion of the chain corresponds to 48 to 56 (HSVRAYSSR). Residues 57–77 (GAGLLLLLGQVADGLCTPLVG) traverse the membrane as a helical segment. The Cytoplasmic portion of the chain corresponds to 78–97 (YEADRAAGRCARCGPRKAWH). Residues 98-118 (LVGTVCVLLSFPFIFSPCLGC) form a helical membrane-spanning segment. Over 119 to 124 (GAATPE) the chain is Lumenal. A helical membrane pass occupies residues 125–145 (WAALLYYGPFIVVFQFGWAAT). The Cytoplasmic portion of the chain corresponds to 146 to 168 (QIAHLSLIPELVTSDHEKVELTA). Residues 169–189 (LRYAFTVVANITVFGAAWLLL) traverse the membrane as a helical segment. The Lumenal portion of the chain corresponds to 190 to 216 (RLQGSAREGPPDEAGDHLGVQDVPVFR). The chain crosses the membrane as a helical span at residues 217 to 237 (TLSLCVVGVGAVFSLLFHLGT). At 238–277 (RERRRPPAQEPDERSPLLAPATARPLLLWKHWLREPSFYQ) the chain is on the cytoplasmic side. The helical transmembrane segment at 278 to 300 (VGLLYMSTRLIVNLSQTYIAMYL) threads the bilayer. Topologically, residues 301 to 308 (TYSLNLPK) are lumenal. A helical membrane pass occupies residues 309-329 (KFIATIPLVMYVSGFCSSFLM). Residues 330-338 (KPVNKCIGR) lie on the Cytoplasmic side of the membrane. Residues 339–359 (NMTYFVGLLVILAFAAWVVLV) form a helical membrane-spanning segment. The Lumenal portion of the chain corresponds to 360-361 (DE). The chain crosses the membrane as a helical span at residues 362-382 (LGMAVYVAAVLLGGGCATILV). The Cytoplasmic segment spans residues 383 to 400 (TSLAMTADLIGPHTHSGA). Residues 401-421 (FVYGAMSFSDKVANGLAVMVI) form a helical membrane-spanning segment. The Lumenal portion of the chain corresponds to 422 to 436 (QSLHPCSLELCCRAC). A helical membrane pass occupies residues 437–457 (VGFYHWVMVAVTGGVGVAATL). The Cytoplasmic portion of the chain corresponds to 458–478 (SLCSLLVWPIRLRSWDPGAQP).

This sequence belongs to the major facilitator superfamily.

Its subcellular location is the melanosome membrane. The protein resides in the lysosome membrane. The enzyme catalyses L-cysteine(in) = L-cysteine(out). In terms of biological role, transporter that mediates the import of cysteine into melanosomes, thereby regulating skin/hair pigmentation. In melanosomes, cysteine import is required both for normal levels of cystine, the oxidized dimer of cysteine, and provide cysteine for the production of the cysteinyldopas used in pheomelanin synthesis, thereby regulating skin/hair pigmentation. Also catalyzes import of cysteine into lysosomes in non-pigmented cells, regulating lysosomal cystine and cysteine storage, which is essnetial for redox homeostasis. The sequence is that of Major facilitator superfamily domain-containing protein 12 from Equus caballus (Horse).